We begin with the raw amino-acid sequence, 211 residues long: Probable calcium-binding protein CML11 (211 aa).

Disordered stretches follow at residues 1 to 22 and 40 to 60; these read MSEPATTTPTPTPAGDHDAAAT and SCSAQQQQQQQQQQEEPLGDD. Positions 44-53 are enriched in low complexity; that stretch reads QQQQQQQQQQ. EF-hand domains lie at 60–95, 96–131, 136–171, and 172–207; these read DQLGELREIFRSFDRNGDGSLTQLELGSLLRSLGLK, PSTDELDSLIQRADTNSNGLIEFSEFVALVAPELLY, YSEDQIRRLFNIFDRDGNGFITAAELAHSMAKLGHA, and LTVKELTGMIKEADTDGDGRISFQEFSRAITAAAFD. The Ca(2+) site is built by aspartate 73, asparagine 75, aspartate 77, serine 79, glutamate 84, aspartate 109, asparagine 111, asparagine 113, glutamate 120, aspartate 149, aspartate 151, asparagine 153, glutamate 160, aspartate 185, aspartate 187, aspartate 189, arginine 191, and glutamate 196.

Its function is as follows. Potential calcium sensor. In Oryza sativa subsp. japonica (Rice), this protein is Probable calcium-binding protein CML11 (CML11).